The primary structure comprises 285 residues: Probable fructose-bisphosphate aldolase (285 aa).

Residue Ser50 participates in D-glyceraldehyde 3-phosphate binding. Catalysis depends on Asp85, which acts as the Proton donor. Zn(2+) contacts are provided by His86, Asp107, Glu137, and His181. Position 182 (Gly182) interacts with dihydroxyacetone phosphate. Zn(2+) is bound at residue His209. Dihydroxyacetone phosphate-binding positions include 210–212 (GGT) and 231–234 (NVNT). Thr212 and Thr234 each carry phosphothreonine.

This sequence belongs to the class II fructose-bisphosphate aldolase family. Zn(2+) serves as cofactor. Post-translationally, phosphorylated during sporulation.

It catalyses the reaction beta-D-fructose 1,6-bisphosphate = D-glyceraldehyde 3-phosphate + dihydroxyacetone phosphate. The protein operates within carbohydrate degradation; glycolysis; D-glyceraldehyde 3-phosphate and glycerone phosphate from D-glucose: step 4/4. Its function is as follows. Catalyzes the aldol condensation of dihydroxyacetone phosphate (DHAP or glycerone-phosphate) with glyceraldehyde 3-phosphate (G3P) to form fructose 1,6-bisphosphate (FBP) in gluconeogenesis and the reverse reaction in glycolysis. This Bacillus subtilis (strain 168) protein is Probable fructose-bisphosphate aldolase (fbaA).